The primary structure comprises 180 residues: Transcriptional repressor NrdR (180 aa).

A zinc finger lies at 3 to 34; sequence CPRCSKQEIRVLESRSAEGGQSVRRRRECMSC. Residues 49 to 139 form the ATP-cone domain; the sequence is IMVIKRDGSR…VYRQFQGIKD (91 aa). The disordered stretch occupies residues 155 to 180; sequence LERLLQDSSASDSESSGSPDLVGEYS. Residues 160–174 show a composition bias toward low complexity; sequence QDSSASDSESSGSPD.

Belongs to the NrdR family. Zn(2+) is required as a cofactor.

In terms of biological role, negatively regulates transcription of bacterial ribonucleotide reductase nrd genes and operons by binding to NrdR-boxes. This Synechococcus sp. (strain JA-2-3B'a(2-13)) (Cyanobacteria bacterium Yellowstone B-Prime) protein is Transcriptional repressor NrdR.